The following is a 1187-amino-acid chain: DENN domain and WD repeat-containing protein SCD1 (1187 aa).

The 161-residue stretch at 19-179 (TVDGDLGFHG…NVPLPTPGKD (161 aa)) folds into the uDENN domain. The 132-residue stretch at 199–330 (SLPQADISLQ…EFSTLRNDIL (132 aa)) folds into the cDENN domain. The region spanning 332-437 (LLHPNVVAID…ERRLSSDEKS (106 aa)) is the dDENN domain. 2 disordered regions span residues 508-536 (SGAL…SSME) and 765-793 (SAGL…GRSW). Positions 526-536 (NTKEDNFSSME) are enriched in basic and acidic residues. Over residues 779–793 (SDETQQPSEASGRSW) the composition is skewed to polar residues. 8 WD repeats span residues 841–892 (GHGG…SELR), 897–934 (GHTG…LLEE), 937–975 (GHDS…CVAT), 978–1017 (RCSS…QMHK), 1020–1057 (GHTK…CDAV), 1060–1099 (CHAG…IKCV), 1104–1141 (LHSS…GTKV), and 1152–1187 (RTAA…TINI).

As to quaternary structure, interacts with FLS2. As to expression, expressed in roots, rosette and cauline leaves, buds and flowers.

The protein localises to the cell membrane. It localises to the cytoplasmic vesicle. The protein resides in the clathrin-coated vesicle. Involved in growth and development through its role in cytokinesis and polarized cell expansion. Required for plasma membrane internalization. May function in clathrin-mediated membrane trafficking, including plasma membrane endocytosis, essential to both cytokinesis and cell expansion. Acts as a negative regulator of basal resistance against bacteria. The chain is DENN domain and WD repeat-containing protein SCD1 from Arabidopsis thaliana (Mouse-ear cress).